The following is a 268-amino-acid chain: Testis-specific serine/threonine-protein kinase 3 (268 aa).

Residues 10–265 enclose the Protein kinase domain; sequence YQLGKTIGEG…IEEVSWHPWL (256 aa). Residues 16-24 and Lys-39 contribute to the ATP site; that span reads IGEGTYSKV. Asp-134 functions as the Proton acceptor in the catalytic mechanism. Ser-166 bears the Phosphoserine; by autocatalysis mark. Residue Thr-168 is modified to Phosphothreonine; by PDPK1.

This sequence belongs to the protein kinase superfamily. CAMK Ser/Thr protein kinase family. It depends on Mg(2+) as a cofactor. Requires Mn(2+) as cofactor. Post-translationally, autophosphorylated at Ser-166. Phosphorylation at Thr-168 by PDPK1 activates the serine/threonine protein kinase activity. In terms of tissue distribution, developmentally expressed in testicular germ cells. In adult testis, expression was detected in round and condensing spermatids, but not in meiotic pachytene spermatocytes. Not expressed in brain, ovary, kidney, liver or early embryonic cells.

Its subcellular location is the cell projection. The protein resides in the cilium. It is found in the flagellum. The enzyme catalyses L-seryl-[protein] + ATP = O-phospho-L-seryl-[protein] + ADP + H(+). The catalysed reaction is L-threonyl-[protein] + ATP = O-phospho-L-threonyl-[protein] + ADP + H(+). With respect to regulation, activated by phosphorylation on Thr-168 by PDPK1. Serine/threonine protein kinase required for spermatid development and male fertility. The protein is Testis-specific serine/threonine-protein kinase 3 of Mus musculus (Mouse).